The sequence spans 176 residues: Peptide deformylase (176 aa).

Cys94 and His136 together coordinate Fe cation. The active site involves Glu137. His140 is a Fe cation binding site.

The protein belongs to the polypeptide deformylase family. It depends on Fe(2+) as a cofactor.

The catalysed reaction is N-terminal N-formyl-L-methionyl-[peptide] + H2O = N-terminal L-methionyl-[peptide] + formate. Removes the formyl group from the N-terminal Met of newly synthesized proteins. Requires at least a dipeptide for an efficient rate of reaction. N-terminal L-methionine is a prerequisite for activity but the enzyme has broad specificity at other positions. This chain is Peptide deformylase, found in Bartonella henselae (strain ATCC 49882 / DSM 28221 / CCUG 30454 / Houston 1) (Rochalimaea henselae).